The primary structure comprises 122 residues: Holo-[acyl-carrier-protein] synthase (122 aa).

2 residues coordinate Mg(2+): Asp8 and Glu56.

This sequence belongs to the P-Pant transferase superfamily. AcpS family. Mg(2+) is required as a cofactor.

Its subcellular location is the cytoplasm. The enzyme catalyses apo-[ACP] + CoA = holo-[ACP] + adenosine 3',5'-bisphosphate + H(+). Functionally, transfers the 4'-phosphopantetheine moiety from coenzyme A to a Ser of acyl-carrier-protein. The polypeptide is Holo-[acyl-carrier-protein] synthase (Salinispora arenicola (strain CNS-205)).